Consider the following 144-residue polypeptide: Aklanonic acid methyl ester cyclase AcmA (144 aa).

2 residues coordinate substrate: asparagine 51 and glutamine 105.

The protein belongs to the polyketide cyclase DnrD family. In terms of assembly, homotetramer.

The enzyme catalyses methyl aklanonate = aklaviketone. The protein operates within antibiotic biosynthesis; daunorubicin biosynthesis. It participates in antibiotic biosynthesis; carminomycin biosynthesis. It functions in the pathway antibiotic biosynthesis; rhodomycin biosynthesis. Its pathway is antibiotic biosynthesis; aclacinomycin biosynthesis. Involved in the biosynthesis of aklavinone which is an important precursor common to the formation of the clinically significant anthracyclines such as carminomycin, daunorubicin (daunomycin), rhodomycin, aclacinomycin T (aklavin) and aclacinomycin A (aclarubicin). These compounds are aromatic polyketide antibiotics that exhibit high cytotoxicity and are widely applied in the chemotherapy of a variety of cancers. Catalyzes the cyclization of aklanonic acid methyl ester to yield aklaviketone. It is also able to use nogalonic acid methyl ester as substrate, but produces exclusively auraviketone with C9-R stereochemistry. In Streptomyces galilaeus, this protein is Aklanonic acid methyl ester cyclase AcmA (acma).